The sequence spans 94 residues: Large ribosomal subunit protein bL27 (94 aa).

Residues 1-9 (MLKLNLQFF) constitute a propeptide that is removed on maturation.

The protein belongs to the bacterial ribosomal protein bL27 family. The N-terminus is cleaved by ribosomal processing cysteine protease Prp.

The sequence is that of Large ribosomal subunit protein bL27 from Staphylococcus epidermidis (strain ATCC 35984 / DSM 28319 / BCRC 17069 / CCUG 31568 / BM 3577 / RP62A).